We begin with the raw amino-acid sequence, 804 residues long: MLVSYNWLKDFLDLDEDPKDLGEKITRTGVEIASVDHPAEGLKKIVVGHILECEDIEGTHLHKCQVDVGEEEPIQIVCGAPNVAAGEDVIVALHGARIAGNEKIKRGKIRGIKSNGMICGLQEIGFEDKVVPAKYADGIFVFPKDADVKPGEEVYKALGMDDYILDFDITPNRADTLSMEGAAYEVGAIVDEKPKVEPVVLKEDGPDWTNELDVQVDEKLAPKFYLRKISNVKIGESPLWMQRRLWNAGIRPINNVVDVTNYVMLLTGQPMHAYDARTFKDGKLEVRKANKNEKLTLLNDKEVELDPNDIIITDGQKPVMMAGVMGGKNSEVEDDTTDVILESAVFDGTSVRKSALRHANRTEASSRFEKGVNWDNTQKALDMAALLLRNDADGTVNEGEIKATDAQRNPSVVKTTVSYINKVLGTELSRAEMEKIFDQLGFTVAGSEDELVVTIPNRRWDISIPADLVEEVGRIYGYDNLKSTQPLLAETHGGYSAKETAMRRIKDIVQGQGLMEAISYSLTSPEKAISFTKDPKPVVEVQWPLNSSRSTMRENLITGLVDAASYNMARKQKELALFEQGRVYDHENNTFNEHEHLAALYSGHTLAANWQHLDQKIDFYFVKGQLTNLFRAIGIKDEDVEYRAELVQGMHPTRTAGIYINDQYIGLIGMLAHAVTTLDKALRGSEIYVYEIDLDTIVSMLHKGMKAKAAPKFPAIERDLSLLVPNDVTNAQIEAQIKLNGGKYLYDIRVIDVYAGSQIESGHKSISYSLTFLNEKDTLTDEVVATAMEKIEADLKESLKIKVR.

The 117-residue stretch at 39–155 (AEGLKKIVVG…ADVKPGEEVY (117 aa)) folds into the tRNA-binding domain. In terms of domain architecture, B5 spans 408 to 483 (RNPSVVKTTV…RIYGYDNLKS (76 aa)). D461, D467, E470, and E471 together coordinate Mg(2+). In terms of domain architecture, FDX-ACB spans 711-804 (PKFPAIERDL…LKESLKIKVR (94 aa)).

Belongs to the phenylalanyl-tRNA synthetase beta subunit family. Type 1 subfamily. Tetramer of two alpha and two beta subunits. Requires Mg(2+) as cofactor.

It localises to the cytoplasm. The catalysed reaction is tRNA(Phe) + L-phenylalanine + ATP = L-phenylalanyl-tRNA(Phe) + AMP + diphosphate + H(+). In Lactobacillus johnsonii (strain CNCM I-12250 / La1 / NCC 533), this protein is Phenylalanine--tRNA ligase beta subunit.